A 254-amino-acid chain; its full sequence is Probable septum site-determining protein MinC (254 aa).

It belongs to the MinC family. Interacts with MinD and FtsZ.

Cell division inhibitor that blocks the formation of polar Z ring septums. Rapidly oscillates between the poles of the cell to destabilize FtsZ filaments that have formed before they mature into polar Z rings. Prevents FtsZ polymerization. The chain is Probable septum site-determining protein MinC from Burkholderia ambifaria (strain ATCC BAA-244 / DSM 16087 / CCUG 44356 / LMG 19182 / AMMD) (Burkholderia cepacia (strain AMMD)).